Reading from the N-terminus, the 56-residue chain is uncharacterized protein (56 aa).

This is an uncharacterized protein from Treponema pallidum (strain Nichols).